Consider the following 29-residue polypeptide: Dermaseptin-9TR (29 aa).

As to expression, expressed by the skin glands.

It localises to the secreted. In terms of biological role, has antimicrobial activity. This Phyllomedusa trinitatis (Trinidad leaf frog) protein is Dermaseptin-9TR.